The chain runs to 198 residues: GTP cyclohydrolase 1 (198 aa).

Zn(2+) is bound by residues C87, H90, and C158.

It belongs to the GTP cyclohydrolase I family. As to quaternary structure, homomer.

The enzyme catalyses GTP + H2O = 7,8-dihydroneopterin 3'-triphosphate + formate + H(+). It participates in cofactor biosynthesis; 7,8-dihydroneopterin triphosphate biosynthesis; 7,8-dihydroneopterin triphosphate from GTP: step 1/1. The sequence is that of GTP cyclohydrolase 1 from Janthinobacterium sp. (strain Marseille) (Minibacterium massiliensis).